Reading from the N-terminus, the 39-residue chain is Mating pheromone Er-11 (39 aa).

3 cysteine pairs are disulfide-bonded: Cys3/Cys19, Cys10/Cys34, and Cys15/Cys26.

As to quaternary structure, homodimer.

The protein resides in the secreted. In terms of biological role, mating ciliate pheromones (or gamones) are diffusible extracellular communication signals that distinguish different intraspecific classes of cells commonly referred to as 'mating types'. They prepare the latter for conjugation by changing their cell surface properties. The protein is Mating pheromone Er-11 (MAT11) of Euplotes raikovi.